We begin with the raw amino-acid sequence, 2718 residues long: E3 SUMO-protein ligase RanBP2 (2718 aa).

The segment at 1–100 is sufficient for interaction with Hsp83; the sequence is MFTTRKEVDA…DPRQSEVVID (100 aa). A sufficient for interaction with piwi region spans residues 1-200; sequence MFTTRKEVDA…EKMKIDQAFN (200 aa). TPR repeat units lie at residues 26–58 and 59–94; these read DIKG…VRDD and AVGH…DPRQ. Disordered stretches follow at residues 796–816 and 937–959; these read QQDR…VHNN and EHQQ…HPVV. Residues 803–816 are compositionally biased toward polar residues; sequence GIDNSFGSPDVHNN. Repeat 1 spans residues 808–809; the sequence is FG. The 27 X 2 AA repeats of F-G stretch occupies residues 808–2581; it reads FGSPDVHNNS…GEENETKLFG (1774 aa). Residues 938-948 show a composition bias toward low complexity; sequence HQQQQQHQQQQ. A run of 3 repeats spans residues 1028 to 1029, 1035 to 1036, and 1104 to 1105. The disordered stretch occupies residues 1181–1208; sequence QPVEKEPPANVVITSSDPLPKPTTASVQ. Residues 1192–1208 show a composition bias toward polar residues; that stretch reads VITSSDPLPKPTTASVQ. Repeat unit 5 spans residues 1252–1253; sequence FG. Disordered stretches follow at residues 1263 to 1314 and 1483 to 1502; these read FKTQ…KPII and NKPQ…ATAA. Residues 1284 to 1299 are compositionally biased toward polar residues; that stretch reads NQSGATDPNKTLPQDT. One can recognise a RanBD1 1 domain in the interval 1309-1445; the sequence is DFKPIIPLPD…FTKASEAAKS (137 aa). Residues 1483–1493 are compositionally biased toward polar residues; it reads NKPQEQTKTQP. 4 tandem repeats follow at residues 1506–1507, 1539–1540, 1547–1548, and 1552–1553. Residues 1605-1742 enclose the RanBD1 2 domain; it reads QFVPVIALPD…VQKAQQSIGN (138 aa). Positions 1738 to 1761 are disordered; that stretch reads QSIGNEPKKEEVPSAAGEKEKPIK. The span at 1743–1760 shows a compositional bias: basic and acidic residues; that stretch reads EPKKEEVPSAAGEKEKPI. Copy 10 of the repeat occupies 1763-1764; sequence FG. A RanBP2-type 1 zinc finger spans residues 1770 to 1799; sequence KAGSWNCQACYTNNGQDQLYCLACQEPKDA. 4 tandem repeats follow at residues 1826-1827, 1842-1843, 1874-1875, and 1883-1884. A RanBP2-type 2 zinc finger spans residues 1890-1919; it reads AVGSWSCSACYVNNPGESLYCSACDAPKND. Repeat copies occupy residues 1942-1943 and 1944-1945. 3 disordered regions span residues 1981–2021, 2154–2204, and 2239–2273; these read FTFS…TYFS, EDSP…THEV, and SLSR…KDAG. Residues 2002 to 2016 show a composition bias toward acidic residues; the sequence is EDEDNDSQEVEEEEN. Residues 2019-2151 form the RanBD1 3 domain; it reads YFSPVIPLPD…IKNALNETAK (133 aa). Residues 2161–2175 are compositionally biased toward polar residues; the sequence is SVSQSTEANKPSQKN. The span at 2239–2257 shows a compositional bias: low complexity; the sequence is SLSRNNSSASEASKTPSSA. 11 consecutive repeat copies span residues 2260–2261, 2313–2314, 2332–2333, 2352–2353, 2360–2361, 2366–2367, 2393–2394, 2399–2400, 2415–2416, 2421–2422, and 2580–2581. The tract at residues 2320–2346 is disordered; the sequence is AEQQKKDSSESVFGGNKADSQSPATQE. The 144-residue stretch at 2556–2699 folds into the RanBD1 4 domain; sequence HYDAIVELPD…VNSCIKRAKA (144 aa).

The protein belongs to the RanBP2 E3 ligase family. Part of the nuclear pore complex. Forms a complex with Nxt1, sbr/Nxf1 and RanGAP. Interacts (via TPR repeats) with Hsp83; the interaction is required for the nuclear import of the sesquiterpenoid juvenile hormone receptor Met. Interacts (via N-terminus) with piwi. In terms of tissue distribution, expressed in both oocytes and nurse cells (at protein level).

It localises to the nucleus. It is found in the nuclear pore complex. In terms of biological role, E3 SUMO-protein ligase. Component of the nuclear pore complex (NPC), a complex required for trafficking across the nuclear envelope. Required for nuclear import of nuclear localization signal (NLS)-containing proteins in an importin alpha/importin beta-dependent manner, but also for the nuclear import of specific proteins such as phosphorylated Mad or the sesquiterpenoid juvenile hormone receptor Met as part of the juvenile hormone signal transduction pathway. Plays a role in nuclear mRNA export by recruiting the mRNA transport complex composed of Nxt1 and sbr/Nxf1 to the NPC. Essential during germline development for transposon silencing and piRNA biogenesis probably by regulating piwi localization to the nucleus. During oogenesis, required to form granules that modulate the biogenesis of annulate lamellae containing nuclear pore complex components. The protein is E3 SUMO-protein ligase RanBP2 of Drosophila melanogaster (Fruit fly).